The following is a 122-amino-acid chain: MAGPAMLVAAALALCLLLASPGLAWYKPTAGQGYYSVGRAAGLLSGFHRSPYARRSEPRGGTRSLGGVGTFREMRPNLRSLAVCVEEVTPNLQSCEPLPDGRATFQCKADVFLSLSASDCRK.

A signal peptide spans 1-24 (MAGPAMLVAAALALCLLLASPGLA). Trp25 carries the post-translational modification 6'-bromotryptophan. Positions 56 to 122 (SEPRGGTRSL…LSLSASDCRK (67 aa)) are excised as a propeptide.

This sequence belongs to the neuropeptide B/W family.

It localises to the secreted. Its function is as follows. May be involved in the regulation of feeding, neuroendocrine system, memory, learning and in the afferent pain pathway. The protein is Neuropeptide B (NPB) of Bos taurus (Bovine).